Here is a 282-residue protein sequence, read N- to C-terminus: E3 ubiquitin-protein ligase Siah1 (282 aa).

Residues 1–28 (MSRQTATALPTGTSKCPPSQRVPTLSGT) form a disordered region. The segment at 41 to 76 (CPVCFDYVLPPILQCQSGHLVCSNCRPKLTCCPTCR) adopts an RING-type zinc-finger fold. The interval 90-282 (VANSVLFPCK…LGINVTISMC (193 aa)) is SBD. The SIAH-type zinc-finger motif lies at 93-153 (SVLFPCKYAS…VMPHLLHQHK (61 aa)). Cys-98, Cys-105, His-117, Cys-121, Cys-128, Cys-135, His-147, and His-152 together coordinate Zn(2+).

This sequence belongs to the SINA (Seven in absentia) family. As to quaternary structure, homodimer.

The enzyme catalyses S-ubiquitinyl-[E2 ubiquitin-conjugating enzyme]-L-cysteine + [acceptor protein]-L-lysine = [E2 ubiquitin-conjugating enzyme]-L-cysteine + N(6)-ubiquitinyl-[acceptor protein]-L-lysine.. It functions in the pathway protein modification; protein ubiquitination. Functionally, E3 ubiquitin-protein ligase that mediates ubiquitination and subsequent proteasomal degradation of target proteins. E3 ubiquitin ligases accept ubiquitin from an E2 ubiquitin-conjugating enzyme in the form of a thioester and then directly transfers the ubiquitin to targeted substrates. It probably triggers the ubiquitin-mediated degradation of different substrates. This is E3 ubiquitin-protein ligase Siah1 (siah1) from Danio rerio (Zebrafish).